We begin with the raw amino-acid sequence, 194 residues long: Dephospho-CoA kinase (194 aa).

Residues 4 to 194 form the DPCK domain; the sequence is VIGLTGSIGM…VKEILQKLGA (191 aa). 12-17 is an ATP binding site; the sequence is GMGKTT.

It belongs to the CoaE family.

The protein localises to the cytoplasm. The catalysed reaction is 3'-dephospho-CoA + ATP = ADP + CoA + H(+). It functions in the pathway cofactor biosynthesis; coenzyme A biosynthesis; CoA from (R)-pantothenate: step 5/5. Catalyzes the phosphorylation of the 3'-hydroxyl group of dephosphocoenzyme A to form coenzyme A. This chain is Dephospho-CoA kinase, found in Agrobacterium fabrum (strain C58 / ATCC 33970) (Agrobacterium tumefaciens (strain C58)).